The primary structure comprises 353 residues: uncharacterized protein (353 aa).

An N-terminal signal peptide occupies residues 1 to 24 (MRVVKRIAVACYLGITIFSGIAFG).

The protein belongs to the chlamydial CPn_1058/CT_355/TC_0634 family.

This is an uncharacterized protein from Chlamydia muridarum (strain MoPn / Nigg).